A 156-amino-acid chain; its full sequence is Small ribosomal subunit protein uS7 (156 aa).

Belongs to the universal ribosomal protein uS7 family. As to quaternary structure, part of the 30S ribosomal subunit. Contacts proteins S9 and S11.

Functionally, one of the primary rRNA binding proteins, it binds directly to 16S rRNA where it nucleates assembly of the head domain of the 30S subunit. Is located at the subunit interface close to the decoding center, probably blocks exit of the E-site tRNA. This is Small ribosomal subunit protein uS7 from Erwinia tasmaniensis (strain DSM 17950 / CFBP 7177 / CIP 109463 / NCPPB 4357 / Et1/99).